The following is a 445-amino-acid chain: Response regulator protein PilR (445 aa).

Residues 5 to 119 (KALIVDDEPD…RLRELVATAL (115 aa)) form the Response regulatory domain. Asp-11 and Asp-54 each carry 4-aspartylphosphate. The 230-residue stretch at 135-364 (LLGESPPMRA…LENMLERAYT (230 aa)) folds into the Sigma-54 factor interaction domain. Residues 163–170 (GESGSGKE) and 226–235 (ASGGTLFLDE) each bind ATP. Positions 418–437 (RWNRTAAAQRLGLTFRSMRY) form a DNA-binding region, H-T-H motif.

Phosphorylated by PilS.

The protein resides in the cytoplasm. Functionally, member of the two-component regulatory system PilS/PilR that regulates the expression of multiple genes including the type IV pilus (T4P) major subunit PilA. Thereby, plays a major role in the regulation of multiple motility pathways. Upon appropriate environmental signals, the histidine kinase PilS transfers the phosphoryl group onto PilR. In turn, PilR functions as a transcriptional activator by direct binding to a cis-acting sequence upstream of the pilin gene promoter leading to its activation. The protein is Response regulator protein PilR (pilR) of Pseudomonas aeruginosa (strain ATCC 15692 / DSM 22644 / CIP 104116 / JCM 14847 / LMG 12228 / 1C / PRS 101 / PAO1).